A 506-amino-acid chain; its full sequence is Chaperone SurA (506 aa).

Positions 1–29 are cleaved as a signal peptide; sequence MMRRLHSSRRFSGSLLALALGLALPLAHA. 2 PpiC domains span residues 219 to 320 and 351 to 450; these read PVML…KVLQ and VTQT…QVLE.

It is found in the periplasm. The catalysed reaction is [protein]-peptidylproline (omega=180) = [protein]-peptidylproline (omega=0). Functionally, chaperone involved in the correct folding and assembly of outer membrane proteins. Recognizes specific patterns of aromatic residues and the orientation of their side chains, which are found more frequently in integral outer membrane proteins. May act in both early periplasmic and late outer membrane-associated steps of protein maturation. The polypeptide is Chaperone SurA (Bordetella avium (strain 197N)).